We begin with the raw amino-acid sequence, 484 residues long: Probable protein disulfide-isomerase ER-60 (484 aa).

The N-terminal stretch at M1–A14 is a signal peptide. Thioredoxin domains follow at residues S15–G125 and F338–T467. Residues C46, C49, C388, and C391 each act as nucleophile in the active site. Cystine bridges form between C46–C49 and C388–C391. A Prevents secretion from ER motif is present at residues K481–L484.

This sequence belongs to the protein disulfide isomerase family.

It localises to the endoplasmic reticulum lumen. The catalysed reaction is Catalyzes the rearrangement of -S-S- bonds in proteins.. The protein is Probable protein disulfide-isomerase ER-60 of Schistosoma mansoni (Blood fluke).